Reading from the N-terminus, the 278-residue chain is Diaminopimelate epimerase (278 aa).

3 residues coordinate substrate: Asn13, Gln46, and Asn66. The active-site Proton donor is the Cys75. Residues 76-77, Asn159, Asn192, and 210-211 contribute to the substrate site; these read GN and ER. Residue Cys219 is the Proton acceptor of the active site. 220–221 contacts substrate; sequence GT.

It belongs to the diaminopimelate epimerase family. Homodimer.

The protein localises to the cytoplasm. It carries out the reaction (2S,6S)-2,6-diaminopimelate = meso-2,6-diaminopimelate. Its pathway is amino-acid biosynthesis; L-lysine biosynthesis via DAP pathway; DL-2,6-diaminopimelate from LL-2,6-diaminopimelate: step 1/1. Its function is as follows. Catalyzes the stereoinversion of LL-2,6-diaminopimelate (L,L-DAP) to meso-diaminopimelate (meso-DAP), a precursor of L-lysine and an essential component of the bacterial peptidoglycan. This Laribacter hongkongensis (strain HLHK9) protein is Diaminopimelate epimerase.